The primary structure comprises 122 residues: UPF0102 protein VV1_0590 (122 aa).

This sequence belongs to the UPF0102 family.

The polypeptide is UPF0102 protein VV1_0590 (Vibrio vulnificus (strain CMCP6)).